The primary structure comprises 1283 residues: MWGSDRLAGAGGGGAAVTVAFTNARDCFLHLPRRLVAQLHLLQNQAIEVVWSHQPAFLSWVEGRHFSDQGENVAEINRQVGQKLGLSNGGQVFLKPCSHVVSCQQVEVEPLSADDWEILELHAVSLEQHLLDQIRIVFPKAIFPVWVDQQTYIFIQIVALIPAASYGRLETDTKLLIQPKTRRAKENTFSKADAEYKKLHSYGRDQKGMMKELQTKQLQSNTVGITESNENESEIPVDSSSVASLWTMIGSIFSFQSEKKQETSWGLTEINAFKNMQSKVVPLDNIFRVCKSQPPSIYNASATSVFHKHCAIHVFPWDQEYFDVEPSFTVTYGKLVKLLSPKQQQSKTKQNVLSPEKEKQMSEPLDQKKIRSDHNEEDEKACVLQVVWNGLEELNNAIKYTKNVEVLHLGKVWIPDDLRKRLNIEMHAVVRITPVEVTPKIPRSLKLQPRENLPKDISEEDIKTVFYSWLQQSTTTMLPLVISEEEFIKLETKDGLKEFSLSIVHSWEKEKDKNIFLLSPNLLQKTTIQVLLDPMVKEENSEEIDFILPFLKLSSLGGVNSLGVSSLEHITHSLLGRPLSRQLMSLVAGLRNGALLLTGGKGSGKSTLAKAICKEAFDKLDAHVERVDCKALRGKRLENIQKTLEVAFSEAVWMQPSVVLLDDLDLIAGLPAVPEHEHSPDAVQSQRLAHALNDMIKEFISMGSLVALIATSQSQQSLHPLLVSAQGVHIFQCVQHIQPPNQEQRCEILCNVIKNKLDCDINKFTDLDLQHVAKETGGFVARDFTVLVDRAIHSRLSRQSISTREKLVLTTLDFQKALRGFLPASLRSVNLHKPRDLGWDKIGGLHEVRQILMDTIQLPAKYPELFANLPIRQRTGILLYGPPGTGKTLLAGVIARESRMNFISVKGPELLSKYIGASEQAVRDIFIRAQAAKPCILFFDEFESIAPRRGHDNTGVTDRVVNQLLTQLDGVEGLQGVYVLAATSRPDLIDPALLRPGRLDKCVYCPPPDQVSRLEILNVLSDSLPLADDVDLQHVASVTDSFTGADLKALLYNAQLEALHGMLLSSGLQDGSSSSDSDLSLSSMVFLNHSSGSDDSAGDGECGLDQSLVSLEMSEILPDESKFNMYRLYFGSSYESELGNGTSSDLSSQCLSAPSSMTQDLPGVPGKDQLFSQPPVLRTASQEGCQELTQEQRDQLRADISIIKGRYRSQSGEDESMNQPGPIKTRLAISQSHLMTALGHTRPSISEDDWKNFAELYESFQNPKRRKNQSGTMFRPGQKVTLA.

Residues 346-367 (SKTKQNVLSPEKEKQMSEPLDQ) form a disordered region. Ser354 carries the post-translational modification Phosphoserine. The segment covering 355-367 (PEKEKQMSEPLDQ) has biased composition (basic and acidic residues). ATP-binding positions include 599–606 (GGKGSGKS) and 881–888 (GPPGTGKT). Phosphoserine is present on residues Ser1181, Ser1209, and Ser1211. Residues 1260 to 1283 (FQNPKRRKNQSGTMFRPGQKVTLA) are disordered.

The protein belongs to the AAA ATPase family. As to quaternary structure, homooligomer; homooligomerizes in the cytosol, interaction with PEX6 promotes dissociation of the homooligomer. Interacts with PEX6; forming the PEX1-PEX6 AAA ATPase complex, which is composed of a heterohexamer formed by a trimer of PEX1-PEX6 dimers. Interacts indirectly with PEX26, via its interaction with PEX6.

The protein localises to the cytoplasm. The protein resides in the cytosol. It is found in the peroxisome membrane. The catalysed reaction is ATP + H2O = ADP + phosphate + H(+). Component of the PEX1-PEX6 AAA ATPase complex, a protein dislocase complex that mediates the ATP-dependent extraction of the PEX5 receptor from peroxisomal membranes, an essential step for PEX5 recycling. Specifically recognizes PEX5 monoubiquitinated at 'Cys-11', and pulls it out of the peroxisome lumen through the PEX2-PEX10-PEX12 retrotranslocation channel. Extraction by the PEX1-PEX6 AAA ATPase complex is accompanied by unfolding of the TPR repeats and release of bound cargo from PEX5. This chain is Peroxisomal ATPase PEX1, found in Homo sapiens (Human).